Consider the following 320-residue polypeptide: Olfactory receptor 2W1 (320 aa).

The Extracellular segment spans residues 1–25; the sequence is MDQSNYSSLHGFILLGFSNHPKMEM. N-linked (GlcNAc...) asparagine glycosylation occurs at Asn-5. A helical membrane pass occupies residues 26–49; it reads ILSGVVAIFYLITLVGNTAIILAS. Residues 50–57 lie on the Cytoplasmic side of the membrane; that stretch reads LLDSQLHT. The chain crosses the membrane as a helical span at residues 58–79; that stretch reads PMYFFLRNLSFLDLCFTTSIIP. Over 80–100 the chain is Extracellular; the sequence is QMLVNLWGPDKTISYVGCIIQ. Cysteines 97 and 189 form a disulfide. A helical membrane pass occupies residues 101-120; that stretch reads LYVYMWLGSVECLLLAVMSY. At 121 to 139 the chain is on the cytoplasmic side; sequence DRFTAICKPLHYFVVMNPH. A helical membrane pass occupies residues 140–158; the sequence is LCLKMIIMIWSISLANSVV. At 159-195 the chain is on the extracellular side; it reads LCTLTLNLPTCGNNILDHFLCELPALVKIACVDTTTV. Residues 196 to 219 traverse the membrane as a helical segment; the sequence is EMSVFALGIIIVLTPLILILISYG. Over 220 to 236 the chain is Cytoplasmic; the sequence is YIAKAVLRTKSKASQRK. Residues 237-259 traverse the membrane as a helical segment; it reads AMNTCGSHLTVVSMFYGTIIYMY. Topologically, residues 260 to 272 are extracellular; the sequence is LQPGNRASKDQGK. The chain crosses the membrane as a helical span at residues 273 to 292; sequence FLTLFYTVITPSLNPLIYTL. Topologically, residues 293 to 320 are cytoplasmic; that stretch reads RNKDMKDALKKLMRFHHKSTKIKRNCKS.

This sequence belongs to the G-protein coupled receptor 1 family.

The protein resides in the cell membrane. Functionally, odorant receptor. The polypeptide is Olfactory receptor 2W1 (OR2W1) (Homo sapiens (Human)).